The primary structure comprises 293 residues: NAD kinase (293 aa).

The active-site Proton acceptor is Asp72. NAD(+)-binding positions include 72 to 73, 146 to 147, Arg157, Arg174, Asp176, 187 to 192, and Gln247; these read DG, ND, and TAYALS.

Belongs to the NAD kinase family. It depends on a divalent metal cation as a cofactor.

It localises to the cytoplasm. It carries out the reaction NAD(+) + ATP = ADP + NADP(+) + H(+). In terms of biological role, involved in the regulation of the intracellular balance of NAD and NADP, and is a key enzyme in the biosynthesis of NADP. Catalyzes specifically the phosphorylation on 2'-hydroxyl of the adenosine moiety of NAD to yield NADP. The chain is NAD kinase from Chromohalobacter salexigens (strain ATCC BAA-138 / DSM 3043 / CIP 106854 / NCIMB 13768 / 1H11).